We begin with the raw amino-acid sequence, 214 residues long: Large ribosomal subunit protein uL18 (214 aa).

It belongs to the universal ribosomal protein uL18 family. In terms of assembly, part of the 50S ribosomal subunit. Contacts the 5S and 23S rRNAs.

In terms of biological role, this is one of the proteins that bind and probably mediate the attachment of the 5S RNA into the large ribosomal subunit, where it forms part of the central protuberance. In Aeropyrum pernix (strain ATCC 700893 / DSM 11879 / JCM 9820 / NBRC 100138 / K1), this protein is Large ribosomal subunit protein uL18.